The sequence spans 1165 residues: Symplekin (1165 aa).

HEAT repeat units lie at residues 23–58, 61–95, 98–140, 147–186, and 218–257; these read TATA…TVLG, AELA…QVCK, VELL…YLCS, SAEQ…GVVV, and KLQE…IAKM. The disordered stretch occupies residues 365–384; sequence DQQQREMELDTEELERQKQK. Basic and acidic residues predominate over residues 367–384; sequence QQREMELDTEELERQKQK.

Belongs to the Symplekin family. As to quaternary structure, interacts with Cpsf73 and Cpsf100 forming a core cleavage factor required for both polyadenylated and histone mRNA processing. Interacts with Slbp and Lsm11.

It localises to the nucleus. Functionally, component of a protein complex required for cotranscriptional processing of 3'-ends of polyadenylated and histone pre-mRNA. Involved in germline stem cell transit amplification, differentiation and mitosis-to-meiosis transition. This chain is Symplekin, found in Drosophila melanogaster (Fruit fly).